The primary structure comprises 459 residues: Cysteine--tRNA ligase (459 aa).

Residue C28 coordinates Zn(2+). Positions 30–40 (VTVYDLCHFGH) match the 'HIGH' region motif. Zn(2+) is bound by residues C209, H234, and E238. The 'KMSKS' region motif lies at 266–270 (KMSKS). K269 provides a ligand contact to ATP.

Belongs to the class-I aminoacyl-tRNA synthetase family. In terms of assembly, monomer. Requires Zn(2+) as cofactor.

It is found in the cytoplasm. It carries out the reaction tRNA(Cys) + L-cysteine + ATP = L-cysteinyl-tRNA(Cys) + AMP + diphosphate. The sequence is that of Cysteine--tRNA ligase from Actinobacillus pleuropneumoniae serotype 3 (strain JL03).